Reading from the N-terminus, the 287-residue chain is Probable glucose uptake protein GlcU (287 aa).

9 helical membrane passes run 7–29 (LIAL…VGGG), 34–56 (IRGT…HAAF), 58–75 (NLTV…WAFG), 114–136 (WSTI…GISL), 156–178 (MGIL…IFGV), 183–202 (ALFF…SMNH), 209–228 (TALN…FMFY), 233–255 (VGVA…GGIF), and 267–286 (IGIW…LGNL).

This sequence belongs to the GRP transporter (TC 2.A.7.5) family.

The protein resides in the cell membrane. In terms of biological role, involved in the uptake of glucose. The protein is Probable glucose uptake protein GlcU (glcU) of Staphylococcus epidermidis (strain ATCC 35984 / DSM 28319 / BCRC 17069 / CCUG 31568 / BM 3577 / RP62A).